The chain runs to 949 residues: MSGLEDIKNETVDLEKIPIEEVFQQLKCTREGLTTQEGEDRIVIFGPNKLEEKKESKILKFLGFMWNPLSWVMEAAALMAIALANGDNRPPDWQDFVGIICLLVINSTISFIEENNAGNAAAALMAGLAPKTKVLRDGKWSEQEAAILVPGDIVSIKLGDIIPADARLLEGDPLKVDQSALTGESLPVTKHPGQEVFSGSTCKQGEIEAVVIATGVHTFFGKAAHLVDSTNQVGHFQKVLTSIGNFCICSIAIGIAIEIVVMYPIQHRKYRDGIDNLLVLLIGGIPIAMPTVLSVTMAIGSHRLSQQGAITKRMTAIEEMAGMDVLCSDKTGTLTLNKLSVDKNLVEVFCKGVEKDQVLLFAAMASRVENQDAIDAAMVGMLADPKEARAGIREVHFLPFNPVDKRTALTYIDSDGNWHRVSKGAPEQILDLANARPDLRKKVLSCIDKYAERGLRSLAVARQVVPEKTKESPGGPWEFVGLLPLFDPPRHDSAETIRRALNLGVNVKMITGDQLAIGKETGRRLGMGTNMYPSAALLGTDKDSNIASIPVEELIEKADGFAGVFPEHKYEIVKKLQERKHIVGMTGDGVNDAPALKKADIGIAVADATDAARGASDIVLTEPGLSVIISAVLTSRAIFQRMKNYTIYAVSITIRIVFGFMLIALIWEFDFSAFMVLIIAILNDGTIMTISKDRVKPSPTPDSWKLKEIFATGIVLGGYQAIMSVIFFWAAHKTDFFSDKFGVRSIRDNNDELMGAVYLQVSIISQALIFVTRSRSWSFVERPGALLMIAFVIAQLVATLIAVYADWTFAKVKGIGWGWAGVIWIYSIVTYFPQDILKFAIRYILSGKAWASLFDNRTAFTTKKDYGIGEREAQWAQAQRTLHGLQPKEDVNIFPEKGSYRELSEIAEQAKRRAEIARLRELHTLKGHVESVAKLKGLDIDTAGHHYTV.

Ser2 carries the post-translational modification N-acetylserine. Over 2–61 the chain is Cytoplasmic; sequence SGLEDIKNETVDLEKIPIEEVFQQLKCTREGLTTQEGEDRIVIFGPNKLEEKKESKILKF. The helical transmembrane segment at 62–81 threads the bilayer; sequence LGFMWNPLSWVMEAAALMAI. The Extracellular segment spans residues 82 to 93; sequence ALANGDNRPPDW. Residues 94 to 114 form a helical membrane-spanning segment; that stretch reads QDFVGIICLLVINSTISFIEE. The Cytoplasmic segment spans residues 115-243; sequence NNAGNAAAAL…GHFQKVLTSI (129 aa). The chain crosses the membrane as a helical span at residues 244–264; sequence GNFCICSIAIGIAIEIVVMYP. Topologically, residues 265-273 are extracellular; that stretch reads IQHRKYRDG. A helical membrane pass occupies residues 274–291; sequence IDNLLVLLIGGIPIAMPT. Residues 292–643 are Cytoplasmic-facing; it reads VLSVTMAIGS…TSRAIFQRMK (352 aa). Asp329 acts as the 4-aspartylphosphate intermediate in catalysis. Positions 588 and 592 each coordinate Mg(2+). Residues 644–665 form a helical membrane-spanning segment; that stretch reads NYTIYAVSITIRIVFGFMLIAL. The Extracellular portion of the chain corresponds to 666-670; the sequence is IWEFD. Residues 671–693 form a helical membrane-spanning segment; it reads FSAFMVLIIAILNDGTIMTISKD. At 694-709 the chain is on the cytoplasmic side; it reads RVKPSPTPDSWKLKEI. The chain crosses the membrane as a helical span at residues 710–730; it reads FATGIVLGGYQAIMSVIFFWA. At 731 to 751 the chain is on the extracellular side; it reads AHKTDFFSDKFGVRSIRDNND. The helical transmembrane segment at 752–772 threads the bilayer; the sequence is ELMGAVYLQVSIISQALIFVT. At 773–784 the chain is on the cytoplasmic side; the sequence is RSRSWSFVERPG. The chain crosses the membrane as a helical span at residues 785 to 805; that stretch reads ALLMIAFVIAQLVATLIAVYA. Topologically, residues 806–813 are extracellular; that stretch reads DWTFAKVK. The chain crosses the membrane as a helical span at residues 814–834; it reads GIGWGWAGVIWIYSIVTYFPQ. Over 835 to 949 the chain is Cytoplasmic; the sequence is DILKFAIRYI…IDTAGHHYTV (115 aa). Thr881 is modified (phosphothreonine). A phosphoserine mark is found at Ser899 and Ser931. An interaction with 14-3-3 proteins region spans residues 947-949; that stretch reads YTV. Thr948 carries the phosphothreonine modification.

This sequence belongs to the cation transport ATPase (P-type) (TC 3.A.3) family. Type IIIA subfamily. In terms of assembly, binds to 14-3-3 proteins. The binding is induced by phosphorylation of Thr-948. Binding to 14-3-3 proteins activates the H(+)-ATPase. Interacts with PPI1; this interaction promotes ATPase activity. Interacts with PSY1R. Part of a functional complex containing PSKR1, BAK1, CNGC17, and AHA. Interacts with CNGC17 and PSKR1. Triggered by SAUR9 via the phosphorylation of the C-terminal autoinhibitory domain. Interacts with AHA2. Binds to CBC1 and CBC2. Phosphorylated, probably by PHOT1 and PHOT2, at C-terminal Thr-948 in guard cells in response to blue light to induce stomatal opening. As to expression, expressed in guard cells, mesophyll cells, leaves and roots.

It is found in the cell membrane. It catalyses the reaction ATP + H2O + H(+)(in) = ADP + phosphate + 2 H(+)(out). Phosphorylation on Thr residues is repressed by tyrphostin 9, sphingosine, GW5074 and BML-265. By contrast, the fungal phytotoxin fusicoccin (FC) promotes phosphorylation of Thr-948 independently to BHP, thus leading to large stomatal opening. Its function is as follows. The plasma membrane H(+) ATPase of plants and fungi generates a proton gradient that drives the active transport of nutrients by H(+)-symport. The resulting external acidification and/or internal alkinization may mediate growth responses. Forms a functional cation-translocating unit with CNGC17 that is activated by PSKR1/BAK1 and possibly other BAK1/RLK complexes. Promotes stomatal opening in response to blue light. The chain is ATPase 1, plasma membrane-type from Arabidopsis thaliana (Mouse-ear cress).